Here is a 513-residue protein sequence, read N- to C-terminus: Lysine--tRNA ligase (513 aa).

E423 and E430 together coordinate Mg(2+).

This sequence belongs to the class-II aminoacyl-tRNA synthetase family. In terms of assembly, homodimer. Requires Mg(2+) as cofactor.

The protein resides in the cytoplasm. It catalyses the reaction tRNA(Lys) + L-lysine + ATP = L-lysyl-tRNA(Lys) + AMP + diphosphate. The protein is Lysine--tRNA ligase of Anaeromyxobacter dehalogenans (strain 2CP-C).